Here is a 67-residue protein sequence, read N- to C-terminus: MEEWDVPQMKKEVESLKYQLAFQREMASKTIPELLKWIEDGIPKDPFLNPDLMKNNPWVEKGKCTIL.

Cysteine methyl ester is present on C64. Residue C64 is the site of S-farnesyl cysteine attachment. Positions 65-67 (TIL) are cleaved as a propeptide — removed in mature form.

This sequence belongs to the G protein gamma family. G proteins are composed of 3 units, alpha, beta and gamma.

It is found in the cell membrane. Functionally, guanine nucleotide-binding proteins (G proteins) are involved as a modulator or transducer in various transmembrane signaling systems. The beta and gamma chains are required for the GTPase activity, for replacement of GDP by GTP, and for G protein-effector interaction. This chain is Guanine nucleotide-binding protein G(I)/G(S)/G(O) subunit gamma-13 (GNG13), found in Homo sapiens (Human).